A 149-amino-acid polypeptide reads, in one-letter code: Large ribosomal subunit protein bL9 (149 aa).

The protein belongs to the bacterial ribosomal protein bL9 family.

Binds to the 23S rRNA. The chain is Large ribosomal subunit protein bL9 from Stenotrophomonas maltophilia (strain K279a).